Here is a 142-residue protein sequence, read N- to C-terminus: Universal stress protein C (142 aa).

Belongs to the universal stress protein A family.

It is found in the cytoplasm. Required for resistance to DNA-damaging agents. The sequence is that of Universal stress protein C (uspC) from Escherichia coli O6:H1 (strain CFT073 / ATCC 700928 / UPEC).